Consider the following 155-residue polypeptide: Fibroblast growth factor 1 (155 aa).

Ala-2 carries the N-acetylalanine modification. Residues 2 to 15 (AEGEITTFSALTER) constitute a propeptide that is removed on maturation. Position 33 (Asn-33) interacts with heparin. The interval 127 to 143 (KKNGSCKRGPRTHYGQK) is heparin-binding.

This sequence belongs to the heparin-binding growth factors family. As to quaternary structure, monomer. Homodimer. Interacts with FGFR1, FGFR2, FGFR3 and FGFR4. Affinity between fibroblast growth factors (FGFs) and their receptors is increased by heparan sulfate glycosaminoglycans that function as coreceptors. Found in a complex with FGFBP1, FGF1 and FGF2. Interacts with FGFBP1. Part of a Cu(2+)-dependent multiprotein aggregate containing FGF1, S100A13 and SYT1. Interacts with SYT1. Interacts with S100A13. Interacts with LRRC59. Interacts with CSNKA, CSNKB and FIBP. While binding with LRRC59, CSNKA and FIBP seem mutually exclusive, CSNKB and FIBP may cooperatively interact with FGF1. Forms a ternary complex with FGFR1 and ITGAV:ITGB3 and induces the recruitment of PTPN11 to the complex. Post-translationally, in the nucleus, phosphorylated by PKC/PRKCD.

Its subcellular location is the secreted. It localises to the cytoplasm. It is found in the cell cortex. The protein resides in the cytosol. The protein localises to the nucleus. Its function is as follows. Plays an important role in the regulation of cell survival, cell division, angiogenesis, cell differentiation and cell migration. Functions as a potent mitogen in vitro. Acts as a ligand for FGFR1 and integrins. Binds to FGFR1 in the presence of heparin leading to FGFR1 dimerization and activation via sequential autophosphorylation on tyrosine residues which act as docking sites for interacting proteins, leading to the activation of several signaling cascades. Binds to integrin ITGAV:ITGB3. Its binding to integrin, subsequent ternary complex formation with integrin and FGFR1, and the recruitment of PTPN11 to the complex are essential for FGF1 signaling. Induces the phosphorylation and activation of FGFR1, FRS2, MAPK3/ERK1, MAPK1/ERK2 and AKT1. Can induce angiogenesis. The sequence is that of Fibroblast growth factor 1 (FGF1) from Mesocricetus auratus (Golden hamster).